The following is a 329-amino-acid chain: Prostaglandin reductase 1 (329 aa).

The residue at position 18 (T18) is a Phosphothreonine. Residue S20 is modified to Phosphoserine. NADP(+) is bound by residues 152–155, K178, Y193, N217, 239–245, 270–272, and N321; these read GAVG, CGAISTY, and FIV. K178 carries the N6-(2-hydroxyisobutyryl)lysine; alternate modification. Position 178 is an N6-acetyllysine; alternate (K178).

This sequence belongs to the NADP-dependent oxidoreductase L4BD family. In terms of assembly, monomer or homodimer. In terms of tissue distribution, ubiquitously distributed in various tissues and leukocytes, the kidney and liver had the highest enzyme activities.

It is found in the cytoplasm. The catalysed reaction is 13,14-dihydro-15-oxo-prostaglandin E1 + NADP(+) = 15-oxoprostaglandin E1 + NADPH + H(+). It carries out the reaction 13,14-dihydro-15-oxo-prostaglandin E2 + NADP(+) = 15-oxoprostaglandin E2 + NADPH + H(+). The enzyme catalyses 13,14-dihydro-15-oxo-prostaglandin E2 + NAD(+) = 15-oxoprostaglandin E2 + NADH + H(+). It catalyses the reaction 13,14-dihydro-15-oxo-prostaglandin F1alpha + NADP(+) = 15-oxoprostaglandin F1alpha + NADPH + H(+). The catalysed reaction is 13,14-dihydro-15-oxo-PGF2alpha + NADP(+) = 15-oxoprostaglandin F2alpha + NADPH + H(+). It carries out the reaction leukotriene B4 + NADP(+) = 12-oxo-leukotriene B4 + NADPH + H(+). The enzyme catalyses 20-hydroxy-leukotriene B4 + NADP(+) = 12-oxo-20-hydroxy-leukotriene B4 + NADPH + H(+). It catalyses the reaction 6-trans-leukotriene B4 + NADP(+) = 12-oxo-(5S)-hydroxy-(6E,8E,10E,14Z)-eicosatetraenoate + NADPH + H(+). The catalysed reaction is (5S,12S)-dihydroxy-(6E,10E,12E,14Z)-eicosatetraenoate + NADP(+) = 12-oxo-(5S)-hydroxy-(6E,8E,10E,14Z)-eicosatetraenoate + NADPH + H(+). It carries out the reaction 15-oxo-(5S,6R)-dihydroxy-(7E,9E,11Z,13E)-eicosatetraenoate + NADH + H(+) = 15-oxo-(5S,6R)-dihydroxy-(7E,9E,11Z)-eicosatrienoate + NAD(+). The enzyme catalyses an n-alkanal + NADP(+) = an alk-2-enal + NADPH + H(+). It catalyses the reaction hexanal + NADP(+) = (E)-hex-2-enal + NADPH + H(+). The catalysed reaction is octanal + NADP(+) = (2E)-octenal + NADPH + H(+). It carries out the reaction decanal + NADP(+) = (2E)-decenal + NADPH + H(+). The enzyme catalyses dodecanal + NADP(+) = (2E)-dodecenal + NADPH + H(+). It catalyses the reaction 4-hydroxynonanal + NADP(+) = (E)-4-hydroxynon-2-enal + NADPH + H(+). The catalysed reaction is pentan-2-one + NADP(+) = (E)-pent-3-en-2-one + NADPH + H(+). It carries out the reaction nonan-2-one + NADP(+) = (3E)-nonen-2-one + NADPH + H(+). With respect to regulation, down-regulated by nonsteroidal anti-inflammatory drugs diclofenac, indomethacin and niflumic acid. Its function is as follows. NAD(P)H-dependent oxidoreductase involved in metabolic inactivation of pro- and anti-inflammatory eicosanoids: prostaglandins (PG), leukotrienes (LT) and lipoxins (LX). Preferentially uses NADPH over NADH as cofactor. Catalyzes with high efficiency the reduction of the 13,14 double bond of 15-oxoPGs, including 15-oxo-PGE1, 15-oxo-PGE2, 15-oxo-PGF1-alpha and 15-oxo-PGF2-alpha. Catalyzes with lower efficiency the oxidation of the hydroxyl group at C12 of LTB4 and its derivatives, converting them into biologically less active 12-oxo-LTB4 metabolites. Reduces 15-oxo-LXA4 to 13,14 dihydro-15-oxo-LXA4 and may promote neutrophil recruitment at the inflammatory site. Plays a role in metabolic detoxification of alkenals and ketones. Reduces alpha,beta-unsaturated alkenals and ketones, particularly those with medium-chain length, showing highest affinity toward (2E)-decenal and (3E)-3-nonen-2-one. May inactivate 4-hydroxy-2-nonenal, a cytotoxic lipid constituent of oxidized low-density lipoprotein particles. The chain is Prostaglandin reductase 1 (PTGR1) from Sus scrofa (Pig).